The following is a 190-amino-acid chain: Transcription termination/antitermination protein NusG (190 aa).

A KOW domain is found at 138–166 (VGEIVTVTEGPFETFTGTVEEVDQEKARL).

This sequence belongs to the NusG family.

Participates in transcription elongation, termination and antitermination. This is Transcription termination/antitermination protein NusG from Rickettsia bellii (strain RML369-C).